A 318-amino-acid polypeptide reads, in one-letter code: Ribose-phosphate pyrophosphokinase (318 aa).

ATP contacts are provided by residues 40–42 (DGE) and 99–100 (RQ). 2 residues coordinate Mg(2+): His-134 and Asp-173. Lys-196 is an active-site residue. D-ribose 5-phosphate is bound by residues Arg-198, Asp-222, and 226-230 (DTAGT).

Belongs to the ribose-phosphate pyrophosphokinase family. Class I subfamily. In terms of assembly, homohexamer. Requires Mg(2+) as cofactor.

It localises to the cytoplasm. The catalysed reaction is D-ribose 5-phosphate + ATP = 5-phospho-alpha-D-ribose 1-diphosphate + AMP + H(+). It participates in metabolic intermediate biosynthesis; 5-phospho-alpha-D-ribose 1-diphosphate biosynthesis; 5-phospho-alpha-D-ribose 1-diphosphate from D-ribose 5-phosphate (route I): step 1/1. In terms of biological role, involved in the biosynthesis of the central metabolite phospho-alpha-D-ribosyl-1-pyrophosphate (PRPP) via the transfer of pyrophosphoryl group from ATP to 1-hydroxyl of ribose-5-phosphate (Rib-5-P). The protein is Ribose-phosphate pyrophosphokinase of Burkholderia pseudomallei (strain K96243).